We begin with the raw amino-acid sequence, 276 residues long: Probable endonuclease 4 (276 aa).

9 residues coordinate Zn(2+): His70, His108, Glu143, Asp176, His179, His210, Asp223, His225, and Glu255.

This sequence belongs to the AP endonuclease 2 family. It depends on Zn(2+) as a cofactor.

The catalysed reaction is Endonucleolytic cleavage to 5'-phosphooligonucleotide end-products.. Functionally, endonuclease IV plays a role in DNA repair. It cleaves phosphodiester bonds at apurinic or apyrimidinic (AP) sites, generating a 3'-hydroxyl group and a 5'-terminal sugar phosphate. The sequence is that of Probable endonuclease 4 from Mesomycoplasma hyopneumoniae (strain 7448) (Mycoplasma hyopneumoniae).